Consider the following 33-residue polypeptide: Pardaxin P-2 (33 aa).

Belongs to the pardaxin family. As to quaternary structure, in aqueous solution exists as a tetramer.

The protein resides in the secreted. Its subcellular location is the target cell membrane. In terms of biological role, exhibits unusual shark repellent and surfactant properties. Forms voltage-dependent, ion-permeable channels in membranes. At high concentration causes cell membrane lysis. The polypeptide is Pardaxin P-2 (Pardachirus pavoninus (Peacock sole)).